The primary structure comprises 333 residues: DNA-directed RNA polymerase subunit alpha (333 aa).

Residues Met1–Glu233 form an alpha N-terminal domain (alpha-NTD) region. The alpha C-terminal domain (alpha-CTD) stretch occupies residues Ile269–Ala333.

The protein belongs to the RNA polymerase alpha chain family. In plastids the minimal PEP RNA polymerase catalytic core is composed of four subunits: alpha, beta, beta', and beta''. When a (nuclear-encoded) sigma factor is associated with the core the holoenzyme is formed, which can initiate transcription.

It is found in the plastid. Its subcellular location is the chloroplast. The enzyme catalyses RNA(n) + a ribonucleoside 5'-triphosphate = RNA(n+1) + diphosphate. Its function is as follows. DNA-dependent RNA polymerase catalyzes the transcription of DNA into RNA using the four ribonucleoside triphosphates as substrates. This is DNA-directed RNA polymerase subunit alpha from Cucumis sativus (Cucumber).